Here is a 2192-residue protein sequence, read N- to C-terminus: MSVYTQLISVTEMPMSVIHRPLPSELDEEKVLSLMETIKSGVEIPPIDVNWVKGKDENNNYYFSFGGCHRYEATKRLNLKTIRARIIKSTPSDIKVSPRLAQLPSDQSNYNMERLYVQDIFSKIKNKNQPDLSDLIILFDRLTSLAYQDVHSSKKVKFDYFYMFFNIMLDSPILSVTESTGNRVLHLLLLKKLNGLLFSNVLIQNYCHNEKWVYKLLNYLISRSKHDSDVIGELSITLQIICSFNITTKELKYFFKLLESINEERPYYWNVLIEILQFLFRKRVGPDIYFNFSNSNGGLMVPDKQPFDGGYSISFWMNTDDFTSLKYRPGLFSFFSDENVGFEVTFQQQSLIFQIRTKSKSPCIGSHYRFQPGKWYHVIISHEYFLLRKSQLSLYVNGKLEEKMPLLYPKSDRPFTRCHIGNSVSLQNGFLGRIGSILMIKDALEPAEATLLYQIDKNSTMLQEKVPKEGMTAIYDSQLFLASGRRNIPIIFTYHPRATDKALCFEISSGELPNAATIMDGVSILKSVSPLDQLVYIGGLKMIYPLFAQLGQPINGVEIEMPQDISDHMTTSPLPLSNLNDFISIPSSSGPTPIFPSSIGSGHSSCLFKILLSLLQHHPAFREQIIETHGFQVISFLLKSTPTSSPYWTPDDIDSLSRLISFCAGKQPLWSLAIQNLIMNNFQLWSQTNSLTQIALFETIHQRIQTNPQFWRNLVRVDQWLTILRKFYQLPSASSLSPLSLSSNSSSLSASLSPIINSGSWCKESIEKPIFKDLPTIEKIKKARVQIIVIIRETAQPRLSPSETRWLSLYLKESTIENHDDVIRMLEDIIQPLQSKDTWWDDVMASANLQDENLVLKSRKDFQSTQTKLPSHISYLWDIDCCEEVVKRLEEIKYQDRSNLILFKHWVHIRRVRAGNLNGIKTRLTNGNQTNTPILTKLKQMGIIQSPSTSLSTSSITPPPPNSRNTSTGILKNSSIKEKQLFQSNIDSLSFSLKETTTTTTTTTTTTTTSTTSNTGNDSPLSIESPISSPVLIENTTNTTNTTTTNTTNSSMLSIKDYDDGDEPEDTTVVHWKLDRTEGPLRMRRKLKRNYFGSDYKGLSKQNRFGRSRRTTLEKYSNEIETFYIDQDCGDGLGNIIITIVNEPPLPHQTTSYKEIEFFNESQSQSSSSSNIDNLNPNTGLPYNKSTNNLSNVNNVNNNNNNNSNNINVSGNNTIGPSSSKSPLRNSRSMSIGSSATKSPSRQNVKDVFNLDNNNSNSNNNNSNNNNNNNNNNNNNNNNNNNNNNNNNNNNNNNNNNFNNNLSPTLNSILPNLNNISINSGSNTIGPNSSMSSILSPRIGEFDENGVDVSSPNSSSLSSSSSNNQIEEEKFIGSWRCQMVVPVGVIPGQFTITSHYLTFDKDIQIVDQRTGRTFSPSLNGIQQQQQQQQDQDFGSVKIKNTYIWKVKDLVEIHRVRYLLRWNSIEIFLNHKSYMINFSKEQESIQIFNKIVALHPPNLRVKWSDHPSKIIKKSKLTMKWKNREISNFEYLMSLNTIAGRTYNDISQYPVFPQIISDYKSEFLDLNDSRSFRDLSKPMGALNQQRLDTLIKRYQSMQSAQDPTMPPFLYGSHYSNFGIVAYYQVRLEPFTSFHLSLQSGVFDHPQRMFESMDKMWDGVSGNNLADVKELIPEFFYMPEFINNGEGFNFGFTNSKSGDLILPNWAHQSPELFIQINREALESEYVSMNLHHWIDLIFGFKQNGPAAQEANNVFFHLTYENNAALQRDDPDERQSIASQIKEFGQTPPQLFSKPHPIRKTLQEISKPQKDLFARIAQNLFSPSNNGTINSSFSSTSTSTSTSSPPPSTLNSPQGPSLQYPFKVLKTKSSLPLVHISSCQDSDIVVLVYRDGVMAVNQFVPSPNGNLPFTFDIDKTLSTYKEKQIDTLFMSDSVTCISNCFAITPDGKFMFSCATWDSVFKCSNIQNGRVHRLYRDFHHDMVTCISLGSNGKHFATASSDTTILVWNDVDHLIKDSKAKPSYRLCSHDEPVHCLDINEEWDLIASGSMDKKLILHSLGKGHYQRSMIHNGAVEIVKISTVGQTIISYCSMSFLYVHSFNGKLLKIQQSDEKIYDAKLTGESVKKGGVLGVGSSTQYLVTGGTRGVKVRSLPDLNIVHAFDSPAAIKTIELVAHEKYMLIGLNDGNLVIIPFDVKDL.

Disordered stretches follow at residues 948–969, 996–1065, 1160–1303, and 1343–1363; these read STSLSTSSITPPPPNSRNTSTG, TTTT…DEPE, NESQ…NNLS, and DENGVDVSSPNSSSLSSSSSN. Low complexity predominate over residues 996 to 1049; the sequence is TTTTTTTTTTTTTTSTTSNTGNDSPLSIESPISSPVLIENTTNTTNTTTTNTTN. A compositionally biased stretch (polar residues) spans 1171–1187; sequence NIDNLNPNTGLPYNKST. Residues 1188-1231 are compositionally biased toward low complexity; that stretch reads NNLSNVNNVNNNNNNNSNNINVSGNNTIGPSSSKSPLRNSRSMS. Residues 1232-1243 show a composition bias toward polar residues; that stretch reads IGSSATKSPSRQ. Low complexity-rich tracts occupy residues 1253–1303 and 1350–1363; these read NNNS…NNLS and SSPNSSSLSSSSSN. In terms of domain architecture, BEACH-type PH spans 1366-1491; it reads IEEEKFIGSW…ESIQIFNKIV (126 aa). In terms of domain architecture, BEACH spans 1504–1795; sequence DHPSKIIKKS…QLFSKPHPIR (292 aa). A compositionally biased stretch (low complexity) spans 1823-1849; sequence GTINSSFSSTSTSTSTSSPPPSTLNSP. Residues 1823 to 1851 form a disordered region; that stretch reads GTINSSFSSTSTSTSTSSPPPSTLNSPQG. WD repeat units follow at residues 1973–2012, 2022–2061, and 2156–2192; these read FHHDMVTCISLGSNGKHFATASSDTTILVWNDVDHLIKDS, SHDEPVHCLDINEEWDLIASGSMDKKLILHSLGKGHYQRS, and DSPAAIKTIELVAHEKYMLIGLNDGNLVIIPFDVKDL.

This chain is BEACH domain-containing protein lvsE (lvsE), found in Dictyostelium discoideum (Social amoeba).